A 304-amino-acid polypeptide reads, in one-letter code: Probable cobalamin biosynthesis protein CobD (304 aa).

The next 5 membrane-spanning stretches (helical) occupy residues Ile2–Ile22, Ile50–Leu70, Phe73–Thr93, Val147–Ile167, and Ala284–Leu304.

This sequence belongs to the CobD/CbiB family.

It is found in the cell membrane. It participates in cofactor biosynthesis; adenosylcobalamin biosynthesis. In terms of biological role, converts cobyric acid to cobinamide by the addition of aminopropanol on the F carboxylic group. The chain is Probable cobalamin biosynthesis protein CobD from Thermoplasma volcanium (strain ATCC 51530 / DSM 4299 / JCM 9571 / NBRC 15438 / GSS1).